An 819-amino-acid polypeptide reads, in one-letter code: Leucine--tRNA ligase (819 aa).

The 'HIGH' region motif lies at 40-51 (PYPSGAGLHVGH). The 'KMSKS' region motif lies at 600-604 (KMSKS). K603 provides a ligand contact to ATP.

The protein belongs to the class-I aminoacyl-tRNA synthetase family.

Its subcellular location is the cytoplasm. The enzyme catalyses tRNA(Leu) + L-leucine + ATP = L-leucyl-tRNA(Leu) + AMP + diphosphate. The sequence is that of Leucine--tRNA ligase from Chlamydia trachomatis serovar A (strain ATCC VR-571B / DSM 19440 / HAR-13).